An 881-amino-acid chain; its full sequence is Beta-mannosidase (881 aa).

A signal peptide spans Met-1–Ala-18. N-linked (GlcNAc...) asparagine glycosylation is found at Asn-35, Asn-77, Asn-89, and Asn-113. The cysteines at positions 167 and 176 are disulfide-linked. Substrate is bound at residue Trp-190–Trp-192. 3 N-linked (GlcNAc...) asparagine glycosylation sites follow: Asn-226, Asn-297, and Asn-302. A substrate-binding site is contributed by Asn-456. Glu-457 serves as the catalytic Proton donor. Disulfide bonds link Cys-540-Cys-629, Cys-732-Cys-761, and Cys-764-Cys-769. The active-site Nucleophile is Glu-554. Asn-803 is a glycosylation site (N-linked (GlcNAc...) asparagine).

It belongs to the glycosyl hydrolase 2 family. In terms of assembly, monomer.

It localises to the lysosome. The catalysed reaction is Hydrolysis of terminal, non-reducing beta-D-mannose residues in beta-D-mannosides.. It participates in glycan metabolism; N-glycan degradation. In terms of biological role, exoglycosidase that cleaves the single beta-linked mannose residue from the non-reducing end of all N-linked glycoprotein oligosaccharides. This Rattus norvegicus (Rat) protein is Beta-mannosidase.